The primary structure comprises 59 residues: Putative potassium channel toxin Ts24 (59 aa).

Residues M1 to Q22 form the signal peptide. 3 disulfide bridges follow: C29/C50, C35/C55, and C39/C57.

Belongs to the short scorpion toxin superfamily. Potassium channel inhibitor family. Alpha-KTx 04 subfamily. Expressed by the venom gland.

It localises to the secreted. In terms of biological role, potently blocks Kv1.1/KCNA1 (85%), Kv1.2/KCNA2 (91%), Kv1.3/KCNA3 (89%), Kv1.6/KCNA6 (94%), and Shaker (97%). The polypeptide is Putative potassium channel toxin Ts24 (Tityus serrulatus (Brazilian scorpion)).